The chain runs to 229 residues: Enolase-phosphatase E1 (229 aa).

It belongs to the HAD-like hydrolase superfamily. MasA/MtnC family. As to quaternary structure, monomer. Requires Mg(2+) as cofactor.

The catalysed reaction is 5-methylsulfanyl-2,3-dioxopentyl phosphate + H2O = 1,2-dihydroxy-5-(methylsulfanyl)pent-1-en-3-one + phosphate. The protein operates within amino-acid biosynthesis; L-methionine biosynthesis via salvage pathway; L-methionine from S-methyl-5-thio-alpha-D-ribose 1-phosphate: step 3/6. It participates in amino-acid biosynthesis; L-methionine biosynthesis via salvage pathway; L-methionine from S-methyl-5-thio-alpha-D-ribose 1-phosphate: step 4/6. Its function is as follows. Bifunctional enzyme that catalyzes the enolization of 2,3-diketo-5-methylthiopentyl-1-phosphate (DK-MTP-1-P) into the intermediate 2-hydroxy-3-keto-5-methylthiopentenyl-1-phosphate (HK-MTPenyl-1-P), which is then dephosphorylated to form the acireductone 1,2-dihydroxy-3-keto-5-methylthiopentene (DHK-MTPene). The sequence is that of Enolase-phosphatase E1 from Erwinia tasmaniensis (strain DSM 17950 / CFBP 7177 / CIP 109463 / NCPPB 4357 / Et1/99).